A 613-amino-acid chain; its full sequence is Ribosome-associated molecular chaperone SSB1 (613 aa).

The segment at 1-391 (MADGVFQGAI…ILTGQSTNDD (391 aa)) is nucleotide binding domain (NBD). ATP contacts are provided by residues 16–18 (TTY), Lys73, 205–207 (GGT), 271–278 (ERAKRSLS), and Gly342. The tract at residues 392–402 (TKDLLLLDVIP) is inter-domain linker. Residues 403–613 (LSLGVAMQGN…RAVTKGMATR (211 aa)) are substrate binding domain (SBD). Positions 516 to 612 (TEEIEKMISD…KRAVTKGMAT (97 aa)) are lid domain (SBDalpha). The Nuclear export signal signature appears at 574-582 (IEAALSDAL).

The protein belongs to the heat shock protein 70 family. Ssb-type Hsp70 subfamily. In terms of assembly, binds to ribosomes. Binds close to the ribosomal tunnel exit via contacts with both ribosomal proteins and rRNA. Directly interacts with nascent polypeptides. This interaction is dependent on the ribosome-associated complex (RAC). Interacts with SSE1. Interacts with FES1.

Its subcellular location is the cytoplasm. It catalyses the reaction ATP + H2O = ADP + phosphate + H(+). Ribosome-bound, Hsp70-type chaperone that assists in the cotranslational folding of newly synthesized proteins in the cytosol. Stimulates folding by interacting with nascent chains, binding to short, largely hydrophobic sequences exposed by unfolded proteins, thereby stabilizing longer, more slowly translated, and aggregation-prone nascent polypeptides and domains that cannot fold stably until fully synthesized. The Hsp70-protein substrate interaction depends on ATP-binding and on allosteric regulation between the NBD and the SBD. The ATP-bound state is characterized by a fast exchange rate of substrate (low affinity state), while in the ADP-bound state exchange is much slower (high affinity state). During the Hsp70 cycle, the chaperone switches between the ATP-bound state (open conformation) and the ADP-bound state (closed conformation) by major conformational rearrangements involving mainly the lid domain. Ssb cooperates with a specific Hsp40/Hsp70 co-chaperone termed the ribosome-associated complex (RAC), which stimulates the ATPase activity of the ribosome-associated pool of Ssbs and switches it to the high affinity substrate binding state. Hsp110 chaperone SSE1 and FES1 act as nucleotide exchange factors that cause substrate release. This is Ribosome-associated molecular chaperone SSB1 (SSB1) from Candida albicans (strain WO-1) (Yeast).